A 287-amino-acid polypeptide reads, in one-letter code: Pyridoxal kinase PdxY (287 aa).

Residues Ser10 and 45 to 46 (TQ) contribute to the substrate site. ATP contacts are provided by residues Asp112, Ala144, Glu149, Lys182, and 209–212 (RPLV). Asp224 provides a ligand contact to substrate.

Belongs to the pyridoxine kinase family. PdxY subfamily. Homodimer. The cofactor is Mg(2+).

It catalyses the reaction pyridoxal + ATP = pyridoxal 5'-phosphate + ADP + H(+). It functions in the pathway cofactor metabolism; pyridoxal 5'-phosphate salvage; pyridoxal 5'-phosphate from pyridoxal: step 1/1. Functionally, pyridoxal kinase involved in the salvage pathway of pyridoxal 5'-phosphate (PLP). Catalyzes the phosphorylation of pyridoxal to PLP. This is Pyridoxal kinase PdxY from Shigella sonnei (strain Ss046).